We begin with the raw amino-acid sequence, 1093 residues long: Protein transport protein Sec24A (1093 aa).

Disordered regions lie at residues 1 to 29 (MSQPGIPASGGAPASLQAQNGAALASGSP), 60 to 168 (HPIP…TSLT), 189 to 226 (GPSVPPLVNPPLPTTFQPGAPHGPPPAGGPPPVRALTP), and 294 to 328 (SLPPGYQNTTPPGATGVPPSSLNYPSGPQAFTQTP). 2 stretches are compositionally biased toward polar residues: residues 112-126 (ASQNPATTPMPSSSF) and 138-168 (WQYNYPSTASQTNHCPRASSQPTVSGNTSLT). 2 stretches are compositionally biased toward pro residues: residues 191–201 (SVPPLVNPPLP) and 209–221 (PHGPPPAGGPPPV). Over residues 299-328 (YQNTTPPGATGVPPSSLNYPSGPQAFTQTP) the composition is skewed to polar residues. 4 residues coordinate Zn(2+): Cys-431, Cys-434, Cys-452, and Cys-455. Positions 431-455 (CRSCRTYINPFVSFLDQRRWKCNLC) are zinc finger-like. One copy of the Gelsolin-like repeat lies at 966-1038 (PQPPILQLSV…TPESARIIAF (73 aa)).

It belongs to the SEC23/SEC24 family. SEC24 subfamily. In terms of assembly, COPII is composed of at least five proteins: the Sec23/24 complex, the Sec13/31 complex and Sar1. Interacts with TMED2. Interacts (as part of the Sec23/24 complex) with SEC22B; recruits SEC22B into COPII-coated vesicles for its transport from the endoplasmic reticulum to the Golgi. Interacts with STING1; promoting STING1 translocation to COPII vesicles in a STEEP1-dependent manner. Interacts with TMEM39A. Interacts with SACM1L; this interaction is reduced in the absence of TMEM39A. Interacts with kinase FAM20C; transport of FAM20C from the endoplasmic reticulum to the Golgi is likely to be mediated by COPII vesicles.

The protein resides in the cytoplasmic vesicle. It is found in the COPII-coated vesicle membrane. It localises to the endoplasmic reticulum membrane. Its subcellular location is the cytoplasm. The protein localises to the cytosol. Component of the coat protein complex II (COPII) which promotes the formation of transport vesicles from the endoplasmic reticulum (ER). The coat has two main functions, the physical deformation of the endoplasmic reticulum membrane into vesicles and the selection of cargo molecules for their transport to the Golgi complex. Plays a central role in cargo selection within the COPII complex and together with SEC24B may have a different specificity compared to SEC24C and SEC24D. May package preferentially cargos with cytoplasmic DxE or LxxLE motifs and may also recognize conformational epitopes. This is Protein transport protein Sec24A from Homo sapiens (Human).